Here is a 409-residue protein sequence, read N- to C-terminus: Peptidase T (409 aa).

A Zn(2+)-binding site is contributed by His78. The active site involves Asp80. Asp140 lines the Zn(2+) pocket. Glu173 (proton acceptor) is an active-site residue. Zn(2+)-binding residues include Glu174, Asp196, and His379.

The protein belongs to the peptidase M20B family. The cofactor is Zn(2+).

It localises to the cytoplasm. The enzyme catalyses Release of the N-terminal residue from a tripeptide.. Its function is as follows. Cleaves the N-terminal amino acid of tripeptides. This Salmonella agona (strain SL483) protein is Peptidase T.